We begin with the raw amino-acid sequence, 86 residues long: High affinity immunoglobulin epsilon receptor subunit gamma (86 aa).

An N-terminal signal peptide occupies residues 1–18 (MIPAVVLLLLLLVEQAAA). Over 19–23 (LGEPQ) the chain is Extracellular. Residues 24 to 44 (LCYILDAILFLYGIVLTLLYC) traverse the membrane as a helical segment. The Cytoplasmic portion of the chain corresponds to 45-86 (RLKLQVRKAAIDSYEKSDGVYTGLSTRNQETYETLKHEKPPQ). The region spanning 54 to 82 (AIDSYEKSDGVYTGLSTRNQETYETLKHE) is the ITAM domain. Tyrosine 65 is modified (phosphotyrosine). Serine 69 carries the post-translational modification Phosphoserine. At tyrosine 76 the chain carries Phosphotyrosine. Threonine 78 is subject to Phosphothreonine.

The protein belongs to the CD3Z/FCER1G family. In terms of assembly, igE Fc receptor is a tetramer of an alpha chain, a beta chain, and two disulfide linked gamma chains. Associates with FCGR1A; forms a functional signaling complex. The signaling subunit of immunoglobulin gamma (IgG) Fc receptor complex. As a homodimer or a heterodimer of CD247 and FCER1G, associates with the ligand binding subunit FCGR3A to form a functional receptor complex. Associates with CLEC6A. Interacts with CLEC4E. Interacts (via ITAM domain) with SYK (via SH2 domains); activates SYK, enabling integrin-mediated activation of neutrophils and macrophages. Interacts with common beta chain of interleukin 3 receptor CSF2RB and recruits SYK in response to IL3 stimulation; this interaction is direct. Interacts with CD300LH; the interaction may be indirect. Interacts with CD300LD. Interacts with TARM1.

The protein localises to the cell membrane. Its function is as follows. Adapter protein containing an immunoreceptor tyrosine-based activation motif (ITAM) that transduces activation signals from various immunoreceptors. As a component of the high-affinity immunoglobulin E (IgE) receptor, mediates allergic inflammatory signaling in mast cells. As a constitutive component of interleukin-3 receptor complex, selectively mediates interleukin 4/IL4 production b basophils priming T-cells toward effector T-helper 2 subset. Associates with pattern recognition receptors CLEC4D and CLEC4E to form a functional signaling complex in myeloid cells. Binding of mycobacterial trehalose 6,6'-dimycolate (TDM) to this receptor complex leads to phosphorylation of ITAM, triggering activation of SYK, CARD9 and NF-kappa-B, consequently driving maturation of antigen-presenting cells and shaping antigen-specific priming of T-cells toward effector T-helper 1 and T-helper 17 cell subtypes. May function cooperatively with other activating receptors. Functionally linked to integrin beta-2/ITGB2-mediated neutrophil activation. Also involved in integrin alpha-2/ITGA2-mediated platelet activation. In Sus scrofa (Pig), this protein is High affinity immunoglobulin epsilon receptor subunit gamma (FCER1G).